We begin with the raw amino-acid sequence, 552 residues long: CTP synthase (552 aa).

The amidoligase domain stretch occupies residues 1–271; the sequence is MASAASSKHL…DAFVVRRLGL (271 aa). A CTP-binding site is contributed by Ser-18. UTP is bound at residue Ser-18. ATP-binding positions include 19-24 and Asp-76; that span reads SLGKGL. Asp-76 and Glu-145 together coordinate Mg(2+). Residues 152-154, 192-197, and Lys-228 each bind CTP; these read DIE and KTKPTQ. UTP-binding positions include 192–197 and Lys-228; that span reads KTKPTQ. The Glutamine amidotransferase type-1 domain maps to 296-546; sequence TIALVGKYVD…IEAALKYSAG (251 aa). Gly-359 serves as a coordination point for L-glutamine. Catalysis depends on Cys-386, which acts as the Nucleophile; for glutamine hydrolysis. L-glutamine-binding positions include 387-390, Glu-410, and Arg-472; that span reads LGLQ. Active-site residues include His-519 and Glu-521.

Belongs to the CTP synthase family. In terms of assembly, homotetramer.

It catalyses the reaction UTP + L-glutamine + ATP + H2O = CTP + L-glutamate + ADP + phosphate + 2 H(+). The enzyme catalyses L-glutamine + H2O = L-glutamate + NH4(+). It carries out the reaction UTP + NH4(+) + ATP = CTP + ADP + phosphate + 2 H(+). Its pathway is pyrimidine metabolism; CTP biosynthesis via de novo pathway; CTP from UDP: step 2/2. With respect to regulation, allosterically activated by GTP, when glutamine is the substrate; GTP has no effect on the reaction when ammonia is the substrate. The allosteric effector GTP functions by stabilizing the protein conformation that binds the tetrahedral intermediate(s) formed during glutamine hydrolysis. Inhibited by the product CTP, via allosteric rather than competitive inhibition. Catalyzes the ATP-dependent amination of UTP to CTP with either L-glutamine or ammonia as the source of nitrogen. Regulates intracellular CTP levels through interactions with the four ribonucleotide triphosphates. The protein is CTP synthase of Thermobifida fusca (strain YX).